The primary structure comprises 842 residues: Protein translocase subunit SecA (842 aa).

Residues Gln-85, 103 to 107 (GEGKT), and Asp-493 contribute to the ATP site. Positions 825, 827, 836, and 837 each coordinate Zn(2+).

It belongs to the SecA family. In terms of assembly, monomer and homodimer. Part of the essential Sec protein translocation apparatus which comprises SecA, SecYEG and auxiliary proteins SecDF. Other proteins may also be involved. Zn(2+) is required as a cofactor.

Its subcellular location is the cell membrane. The protein resides in the cytoplasm. The catalysed reaction is ATP + H2O + cellular proteinSide 1 = ADP + phosphate + cellular proteinSide 2.. Its function is as follows. Part of the Sec protein translocase complex. Interacts with the SecYEG preprotein conducting channel. Has a central role in coupling the hydrolysis of ATP to the transfer of proteins into and across the cell membrane, serving as an ATP-driven molecular motor driving the stepwise translocation of polypeptide chains across the membrane. This is Protein translocase subunit SecA from Streptococcus equi subsp. zooepidemicus (strain H70).